Reading from the N-terminus, the 35-residue chain is MPTKRFDKKHWKMVVVLLAICGAMLLLRWAAMIWG.

Residues 14 to 34 (VVVLLAICGAMLLLRWAAMIW) form a helical membrane-spanning segment.

The protein resides in the membrane. This is an uncharacterized protein from Escherichia coli (strain K12).